The sequence spans 487 residues: MASTADGDMGETLEQMRGLWPGVEDLSLNKLATSLGASEQALRLIFSIFLGYPLALFYRHYLFYKDSYLIHLFHTFTGLSIAYFNFGHQFYHSLLCVVLQFLILRLMGRTVTAVITTLCFQMAYLLAGYYYTATGDYDIKWTMPHCVLTLKLIGLCIDYYDGGKDGNSLTSEQQKYAIRGVPSLLEVAGFSYFYGAFLVGPQFSMNHYMKLVRGQLTDIPGKMPNSTIPALKRLSLGLVYLVGYTLLSPHITDDYLLTEDYDNRPFWFRCMYMLIWGKFVLYKYVTCWLVTEGVCILSGLGFNGFDENGTVRWDACANMKVWLFETTPRFNGTIASFNINTNAWVARYIFKRLKFLGNKELSQGLSLLFLALWHGLHSGYLICFQMEFLIVIVEKQVSSLIRDSPALSSLASITALQPFYYLVQQTIHWLFMGYSMTAFCLFTWDKWLKVYRSIYFLGHVFFLSLLFILPYIHKAMVPRKEKLKKRE.

The residue at position 2 (Ala-2) is an N-acetylalanine. The next 4 helical transmembrane spans lie at 44–64 (LIFS…YLFY), 84–104 (FNFG…FLIL), 111–131 (VTAV…GYYY), and 180–200 (GVPS…FLVG). Asn-225 carries an N-linked (GlcNAc...) asparagine glycan. Transmembrane regions (helical) follow at residues 236-256 (LGLV…DDYL) and 285-305 (VTCW…FNGF). Residues Asn-308 and Asn-331 are each glycosylated (N-linked (GlcNAc...) asparagine). Active-site residues include Asn-338 and His-374. 3 helical membrane passes run 364 to 384 (GLSL…LICF), 422 to 442 (LVQQ…FCLF), and 453 to 473 (SIYF…PYIH). The Di-lysine motif motif lies at 484-487 (KKRE).

This sequence belongs to the membrane-bound acyltransferase family. As to expression, detected ubiquitously, with high expression levels in small intestine, brown adipose tissue, liver, kidney and testis. Expressed in liver and both proximal and distal small intestine (at protein level). Expressed in peritoneal macrophages.

The protein localises to the endoplasmic reticulum membrane. The catalysed reaction is a 1-acyl-sn-glycero-3-phosphocholine + an acyl-CoA = a 1,2-diacyl-sn-glycero-3-phosphocholine + CoA. It catalyses the reaction a 1-acyl-sn-glycero-3-phosphoethanolamine + an acyl-CoA = a 1,2-diacyl-sn-glycero-3-phosphoethanolamine + CoA. It carries out the reaction a 1-acyl-sn-glycero-3-phospho-L-serine + an acyl-CoA = a 1,2-diacyl-sn-glycero-3-phospho-L-serine + CoA. The enzyme catalyses (9Z,12Z)-octadecadienoyl-CoA + a 1-acyl-sn-glycero-3-phosphocholine = 1-acyl-2-(9Z,12Z)-octadecadienoyl-sn-glycero-3-phosphocholine + CoA. The catalysed reaction is (5Z,8Z,11Z,14Z)-eicosatetraenoyl-CoA + a 1-acyl-sn-glycero-3-phosphocholine = 1-acyl-2-(5Z,8Z,11Z,14Z-eicosatetraenoyl)-sn-glycero-3-phosphocholine + CoA. It catalyses the reaction dodecanoyl-CoA + 1-hexadecanoyl-sn-glycero-3-phosphocholine = 1-hexadecanoyl-2-dodecanoyl-sn-glycero-3-phosphocholine + CoA. It carries out the reaction octadecanoyl-CoA + 1-hexadecanoyl-sn-glycero-3-phosphocholine = 1-hexadecanoyl-2-octadecanoyl-sn-glycero-3-phosphocholine + CoA. The enzyme catalyses 1-dodecanoyl-sn-glycero-3-phosphocholine + hexadecanoyl-CoA = 1-dodecanoyl-2-hexadecanoyl-sn-glycero-3-phosphocholine + CoA. The catalysed reaction is 1-tetradecanoyl-sn-glycero-3-phosphocholine + hexadecanoyl-CoA = 1-tetradecanoyl-2-hexadecanoyl-sn-glycero-3-phosphocholine + CoA. It catalyses the reaction 1-hexadecanoyl-sn-glycero-3-phosphocholine + hexadecanoyl-CoA = 1,2-dihexadecanoyl-sn-glycero-3-phosphocholine + CoA. It carries out the reaction 1-octadecanoyl-sn-glycero-3-phosphocholine + hexadecanoyl-CoA = 1-octadecanoyl-2-hexadecanoyl-sn-glycero-3-phosphocholine + CoA. The enzyme catalyses 1-(9Z-octadecenoyl)-sn-glycero-3-phosphocholine + hexadecanoyl-CoA = 1-(9Z-octadecenoyl)-2-hexadecanoyl-sn-glycero-3-phosphocholine + CoA. The catalysed reaction is (9Z)-hexadecenoyl-CoA + 1-hexadecanoyl-sn-glycero-3-phosphocholine = 1-hexadecanoyl-2-(9Z-hexadecenoyl)-sn-glycero-3-phosphocholine + CoA. It catalyses the reaction 1-hexadecanoyl-sn-glycero-3-phosphocholine + (9Z)-octadecenoyl-CoA = 1-hexadecanoyl-2-(9Z-octadecenoyl)-sn-glycero-3-phosphocholine + CoA. It carries out the reaction (9Z,12Z)-octadecadienoyl-CoA + 1-hexadecanoyl-sn-glycero-3-phosphocholine = 1-hexadecanoyl-2-(9Z,12Z-octadecadienoyl)-sn-glycero-3-phosphocholine + CoA. The enzyme catalyses 1-dodecanoyl-sn-glycero-3-phosphocholine + (5Z,8Z,11Z,14Z)-eicosatetraenoyl-CoA = 1-dodecanoyl-2-(5Z,8Z,11Z,14Z)-eicosatetraenoyl-sn-glycero-3-phosphocholine + CoA. The catalysed reaction is (5Z,8Z,11Z,14Z)-eicosatetraenoyl-CoA + 1-hexadecanoyl-sn-glycero-3-phosphocholine = 1-hexadecanoyl-2-(5Z,8Z,11Z,14Z-eicosatetraenoyl)-sn-glycero-3-phosphocholine + CoA. It catalyses the reaction 1-octadecanoyl-sn-glycero-3-phosphocholine + (5Z,8Z,11Z,14Z)-eicosatetraenoyl-CoA = 1-octadecanoyl-2-(5Z,8Z,11Z,14Z-eicosatetraenoyl)-sn-glycero-3-phosphocholine + CoA. It carries out the reaction 1-eicosanoyl-sn-glycero-3-phosphocholine + (5Z,8Z,11Z,14Z)-eicosatetraenoyl-CoA = 1-eicosanoyl-2-(5Z,8Z,11Z,14Z)-eicosatetraenoyl-sn-glycero-3-phosphocholine + CoA. The enzyme catalyses 1-(9Z-octadecenoyl)-sn-glycero-3-phosphocholine + (9Z)-octadecenoyl-CoA = 1,2-di-(9Z-octadecenoyl)-sn-glycero-3-phosphocholine + CoA. The catalysed reaction is 1-(9Z-octadecenoyl)-sn-glycero-3-phosphocholine + (9Z,12Z)-octadecadienoyl-CoA = 1-(9Z)-octadecenoyl-2-(9Z,12Z)-octadecadienoyl-sn-glycero-3-phosphocholine + CoA. It catalyses the reaction 1-(9Z-octadecenoyl)-sn-glycero-3-phosphocholine + (5Z,8Z,11Z,14Z)-eicosatetraenoyl-CoA = 1-(9Z)-octadecenoyl-2-(5Z,8Z,11Z,14Z)-icosatetraenoyl-sn-glycero-3-phosphocholine + CoA. It carries out the reaction a 1-acyl-sn-glycero-3-phosphoethanolamine + (9Z,12Z)-octadecadienoyl-CoA = 1-acyl-2-(9Z,12Z)-octadecadienoyl-sn-glycero-3-phosphoethanolamine + CoA. The enzyme catalyses 1-(9Z-octadecenoyl)-sn-glycero-3-phosphoethanolamine + (9Z,12Z)-octadecadienoyl-CoA = 1-(9Z)-octadecenoyl-2-(9Z,12Z)-octadecadienoyl-sn-glycero-3-phosphoethanolamine + CoA. The catalysed reaction is 1-(10Z-heptadecenoyl)-sn-glycero-3-phosphoethanolamine + (9Z,12Z)-octadecadienoyl-CoA = 1-(10Z-heptadecenoyl)-2-(9Z,12Z-octadecadienoyl)-sn-glycero-3-phosphoethanolamine + CoA. It catalyses the reaction a 1-acyl-sn-glycero-3-phosphoethanolamine + (5Z,8Z,11Z,14Z)-eicosatetraenoyl-CoA = 1-acyl-2-(5Z,8Z,11Z,14Z)-eicosatetraenoyl-sn-glycero-3-phosphoethanolamine + CoA. It carries out the reaction 1-hexadecanoyl-sn-glycero-3-phosphoethanolamine + (5Z,8Z,11Z,14Z)-eicosatetraenoyl-CoA = 1-hexadecanoyl-2-(5Z,8Z,11Z,14Z-eicosatetraenoyl)-sn-glycero-3-phosphoethanolamine + CoA. The enzyme catalyses 1-(9Z-octadecenoyl)-sn-glycero-3-phosphoethanolamine + (5Z,8Z,11Z,14Z)-eicosatetraenoyl-CoA = 1-(9Z)-octadecenoyl-2-(5Z,8Z,11Z,14Z)-eicosatetraenoyl-sn-glycero-3-phosphoethanolamine + CoA. The catalysed reaction is 1-(10Z-heptadecenoyl)-sn-glycero-3-phosphoethanolamine + (5Z,8Z,11Z,14Z)-eicosatetraenoyl-CoA = 1-(10Z-heptadecenoyl)-2-(5Z,8Z,11Z,14Z-eicosatetraenoyl)-sn-glycero-3-phosphoethanolamine + CoA. It catalyses the reaction a 1-O-(1Z-alkenyl)-sn-glycero-3-phosphoethanolamine + (5Z,8Z,11Z,14Z)-eicosatetraenoyl-CoA = 1-O-(1Z)-alkenyl-2-(5Z,8Z,11Z,14Z)-eicosatetraenoyl-sn-glycero-3-phosphoethanolamine + CoA. It carries out the reaction a 1-acyl-sn-glycero-3-phospho-L-serine + (9Z,12Z)-octadecadienoyl-CoA = 1-acyl-2-(9Z,12Z-octadecadienoyl)-sn-glycero-3-phospho-L-serine + CoA. The enzyme catalyses a 1-acyl-sn-glycero-3-phospho-L-serine + (5Z,8Z,11Z,14Z)-eicosatetraenoyl-CoA = 1-acyl-2-(5Z,8Z,11Z,14Z-eicosatetraenoyl)-sn-glycero-3-phospho-L-serine + CoA. The catalysed reaction is 1-hexadecanoyl-sn-glycero-3-phospho-L-serine + (9Z)-octadecenoyl-CoA = 1-hexadecanoyl-2-(9Z-octadecenoyl)-sn-glycero-3-phospho-L-serine + CoA. It catalyses the reaction 1-(9Z-octadecenoyl)-sn-glycero-3-phospho-L-serine + (9Z)-octadecenoyl-CoA = 1,2-di-(9Z)-octadecenoyl-sn-glycero-3-phospho-L-serine + CoA. It carries out the reaction 1-hexadecanoyl-sn-glycero-3-phospho-L-serine + (9Z,12Z)-octadecadienoyl-CoA = 1-hexadecanoyl-2-(9Z,12Z-octadecadienoyl)-sn-glycero-3-phospho-L-serine + CoA. The enzyme catalyses 1-(9Z-octadecenoyl)-sn-glycero-3-phospho-L-serine + (9Z,12Z)-octadecadienoyl-CoA = 1-(9Z-octadecenoyl)-2-(9Z,12Z-octadienoyl)-sn-glycero-3-phospho-L-serine + CoA. The catalysed reaction is 1-hexadecanoyl-sn-glycero-3-phospho-L-serine + (5Z,8Z,11Z,14Z)-eicosatetraenoyl-CoA = 1-hexadecanoyl-2-(5Z,8Z,11Z,14Z-eicosatetraenoyl)-sn-glycero-3-phospho-L-serine + CoA. It catalyses the reaction 1-(9Z-octadecenoyl)-sn-glycero-3-phospho-L-serine + (5Z,8Z,11Z,14Z)-eicosatetraenoyl-CoA = 1-(9Z-octadecenoyl)-2-(5Z,8Z,11Z,14Z-eicosatetraenoyl)-sn-glycero-3-phospho-L-serine + CoA. Its pathway is lipid metabolism; phospholipid metabolism. In terms of biological role, lysophospholipid O-acyltransferase (LPLAT) that catalyzes the reacylation step of the phospholipid remodeling process also known as the Lands cycle. Catalyzes transfer of the fatty acyl chain from fatty acyl-CoA to 1-acyl lysophospholipid to form various classes of phospholipids. Converts 1-acyl lysophosphatidylcholine (LPC) into phosphatidylcholine (PC) (LPCAT activity), 1-acyl lysophosphatidylserine (LPS) into phosphatidylserine (PS) (LPSAT activity) and 1-acyl lysophosphatidylethanolamine (LPE) into phosphatidylethanolamine (PE) (LPEAT activity). Favors polyunsaturated fatty acyl-CoAs as acyl donors compared to saturated fatty acyl-CoAs. Has higher activity for LPC acyl acceptors compared to LPEs and LPSs. Can also transfer the fatty acyl chain from fatty acyl-CoA to 1-O-alkyl lysophospholipid or 1-O-alkenyl lysophospholipid with lower efficiency. Acts as a major LPC O-acyltransferase in liver and intestine. As a component of the liver X receptor/NR1H3 or NR1H2 signaling pathway, mainly catalyzes the incorporation of arachidonate into PCs of endoplasmic reticulum (ER) membranes, increasing membrane dynamics and enabling triacylglycerols transfer to nascent very low-density lipoprotein (VLDL) particles. Promotes processing of sterol regulatory protein SREBF1 in hepatocytes, likely by facilitating the translocation of SREBF1-SCAP complex from ER to the Golgi apparatus. Participates in mechanisms by which the liver X receptor/NR1H3 or NR1H2 signaling pathway counteracts lipid-induced ER stress response and inflammation. Down-regulates hepatic inflammation by limiting arachidonic acid availability for synthesis of inflammatory eicosanoids, such as prostaglandins. In enterocytes, acts as a component of a gut-brain feedback loop that coordinates dietary lipid absorption and food intake. Regulates the abundance of PCs containing linoleate and arachidonate in enterocyte membranes, enabling passive diffusion of fatty acids and cholesterol across the membrane for efficient chylomicron assembly. In the intestinal crypt, acts as a component of dietary-responsive phospholipid-cholesterol axis, regulating the biosynthesis of cholesterol and its mitogenic effects on intestinal stem cells. The protein is Lysophospholipid acyltransferase 5 (Lpcat3) of Mus musculus (Mouse).